A 456-amino-acid chain; its full sequence is MGVANIIYALFLLGPSIFLKATAQTHPIVIKGNAFFDSKTNERFYIRGVDYQPGGSSSLVDPLASRSCKKDVEIFKKLGINTVRVYQVDNSADHDKCMNALSEAGIYVILDLNTYRHSISRAHPALSYNKVYLQHLFATIDAFKGYDNVLGFFSGNEVVNDEDTTAITWVKAVTRDVKAYIKKHSDRHIPVGYSAADVAENRLQLAHYFNCGDESERADFYAFNMYEWCGYSSMTVSGYYDRIKEFSNYSIPLFLSEFGCNTVEINDDTTPNRPFTEIEAIYSHDMTPVFSGGLVYEYSAEPNHYGLVVIDKDDERRVSRNFITLMKQYAKTPNPKGDGGYKKAGSPSKCPANSTQFNAWEKLPEMPEGAKIYMEKGAGEPLGIEGPTNMWSPFHDGDDDESTSRRPKPKNKPSNVTSTTSYTSGMTSSSESGSSKIGVAFCQALFITVLIATLSF.

Residues 1–25 (MGVANIIYALFLLGPSIFLKATAQT) form the signal peptide. A disulfide bridge connects residues Cys-68 and Cys-97. Residues Tyr-86, Asn-156, Glu-157, Asp-197, and Arg-202 each coordinate (1,3-beta-D-glucosyl)n. Catalysis depends on Glu-157, which acts as the Proton donor. Cystine bridges form between Cys-211–Cys-350 and Cys-229–Cys-260. N-linked (GlcNAc...) asparagine glycosylation is present at Asn-248. Glu-257 (nucleophile) is an active-site residue. Tyr-296 is a binding site for (1,3-beta-D-glucosyl)n. Disordered stretches follow at residues 334–353 (NPKG…CPAN) and 384–434 (IEGP…ESGS). Asn-353 and Asn-415 each carry an N-linked (GlcNAc...) asparagine glycan. A compositionally biased stretch (low complexity) spans 417-434 (TSTTSYTSGMTSSSESGS). Residue Ser-432 is the site of GPI-anchor amidated serine attachment. Positions 433-456 (GSSKIGVAFCQALFITVLIATLSF) are cleaved as a propeptide — removed in mature form.

It belongs to the glycosyl hydrolase 72 family.

It is found in the cell membrane. Splits internally a 1,3-beta-glucan molecule and transfers the newly generated reducing end (the donor) to the non-reducing end of another 1,3-beta-glucan molecule (the acceptor) forming a 1,3-beta linkage, resulting in the elongation of 1,3-beta-glucan chains in the cell wall. Involved in spore wall assembly. The sequence is that of 1,3-beta-glucanosyltransferase gas4 (gas4) from Schizosaccharomyces pombe (strain 972 / ATCC 24843) (Fission yeast).